A 328-amino-acid chain; its full sequence is Tetraacyldisaccharide 4'-kinase (328 aa).

55–62 (TAGGNGKT) is a binding site for ATP.

This sequence belongs to the LpxK family.

It carries out the reaction a lipid A disaccharide + ATP = a lipid IVA + ADP + H(+). Its pathway is glycolipid biosynthesis; lipid IV(A) biosynthesis; lipid IV(A) from (3R)-3-hydroxytetradecanoyl-[acyl-carrier-protein] and UDP-N-acetyl-alpha-D-glucosamine: step 6/6. Functionally, transfers the gamma-phosphate of ATP to the 4'-position of a tetraacyldisaccharide 1-phosphate intermediate (termed DS-1-P) to form tetraacyldisaccharide 1,4'-bis-phosphate (lipid IVA). In Escherichia coli O127:H6 (strain E2348/69 / EPEC), this protein is Tetraacyldisaccharide 4'-kinase.